The following is a 323-amino-acid chain: MMTRVECFNPHRWIILHVAIIIQSKANAQSFSPSPPDLQTGHTPSKTTVFAVLVTLFFLTGLLSVYIRHCARSNPDSSTRYFRNRANDGSSRRGGLDNAVVESFPVFAYSSVKESKIGSKDLECAICLNELEDHETVRLLPICNHLFHIDCIDTWLYSHATCPVCRSNLTAKSNKPGDEDDGVPLAAMRDHVVVDIETVEVAKSHHRRLSSEISGKFPRSNSTGHSMDRFSDGTERFTLRLPDDVKMRLMAVKGRRLKRTRSFDVDLTAEHYCRSGEESSNTIGSGAKSGRVNWPDRWGLTLFVSKSNSGSVRSQKSNGEPLK.

Positions 1–28 (MMTRVECFNPHRWIILHVAIIIQSKANA) are cleaved as a signal peptide. The chain crosses the membrane as a helical span at residues 47–67 (TTVFAVLVTLFFLTGLLSVYI). An RING-type; atypical zinc finger spans residues 124–166 (CAICLNELEDHETVRLLPICNHLFHIDCIDTWLYSHATCPVCR). The segment at 210–229 (SSEISGKFPRSNSTGHSMDR) is disordered.

This sequence belongs to the RING-type zinc finger family. ATL subfamily.

The protein localises to the membrane. The enzyme catalyses S-ubiquitinyl-[E2 ubiquitin-conjugating enzyme]-L-cysteine + [acceptor protein]-L-lysine = [E2 ubiquitin-conjugating enzyme]-L-cysteine + N(6)-ubiquitinyl-[acceptor protein]-L-lysine.. It functions in the pathway protein modification; protein ubiquitination. This is RING-H2 finger protein ATL32 (ATL32) from Arabidopsis thaliana (Mouse-ear cress).